A 234-amino-acid polypeptide reads, in one-letter code: Ribosomal RNA small subunit methyltransferase G (234 aa).

S-adenosyl-L-methionine is bound by residues glycine 85, phenylalanine 90, and arginine 155.

Belongs to the methyltransferase superfamily. RNA methyltransferase RsmG family.

It is found in the cytoplasm. The enzyme catalyses guanosine(527) in 16S rRNA + S-adenosyl-L-methionine = N(7)-methylguanosine(527) in 16S rRNA + S-adenosyl-L-homocysteine. Its function is as follows. Specifically methylates the N7 position of guanine in position 527 of 16S rRNA. This is Ribosomal RNA small subunit methyltransferase G from Rhodopseudomonas palustris (strain BisB18).